The primary structure comprises 399 residues: Inositol polyphosphate 1-phosphatase (399 aa).

Position 54 (Asp-54) interacts with Li(+). Glu-79 is a binding site for Mg(2+). Residue Glu-80 participates in Li(+) binding. Positions 153 and 155 each coordinate Mg(2+). The 1D-myo-inositol 1,4-bisphosphate site is built by Asp-156, Ser-157, Thr-158, Ser-267, Lys-269, Gly-289, Ala-290, Lys-293, and Thr-311. Mg(2+) is bound at residue Asp-316. Ser-317 is subject to Phosphoserine.

It belongs to the inositol monophosphatase superfamily. As to quaternary structure, monomer. The cofactor is Mg(2+). As to expression, ubiquitously expressed, with highest levels in pancreas and kidney.

It catalyses the reaction 1D-myo-inositol 1,4-bisphosphate + H2O = 1D-myo-inositol 4-phosphate + phosphate. The catalysed reaction is 1D-myo-inositol 1,3,4-trisphosphate + H2O = 1D-myo-inositol 3,4-bisphosphate + phosphate. The protein operates within signal transduction; phosphatidylinositol signaling pathway. Inhibited by Li(+). Mg(2+)-dependent phosphatase that catalyzes the hydrolysis of the 1-position phosphate from inositol 1,4-bisphosphate and inositol 1,3,4-trisphosphate and participates in inositol phosphate metabolism. The sequence is that of Inositol polyphosphate 1-phosphatase from Homo sapiens (Human).